The chain runs to 335 residues: MIRWFKCFMRMIFEQVGLNMESVLWSSKPYGSSRSIVRKIGTNLSLIQCPRVQFQLTSQAAEGNHPHQFREDAVASFADVGWVAQEEGEVSTRLRSEVWSKTAQPLPGELHQPGHSLGRQDSVPNLLHEEPAPRSTVIANEEAMQKISALENELATLRAQIAKIVILQEQQNLTAAGLSPVASAAVPCVPPPPPPPPPPPLPPPALQQSMSAIELIRERKNRKTNSGPIPTENGPKKPEIPNMLEILKDMNSVKLRSVKKSSGDTKPKVADPTDPAALIAEALKKKFAYRYRRDSQSESDKVIPKSETNTKTEVVLFGPHMLKSTGKMKTLIEKS.

Residues 1–48 constitute a mitochondrion transit peptide; it reads MIRWFKCFMRMIFEQVGLNMESVLWSSKPYGSSRSIVRKIGTNLSLIQ. The stretch at 134–170 forms a coiled coil; that stretch reads RSTVIANEEAMQKISALENELATLRAQIAKIVILQEQ. The interval 182–309 is necessary and sufficient to promote mitochondrial fission; the sequence is ASAAVPCVPP…DKVIPKSETN (128 aa). The disordered stretch occupies residues 219–240; that stretch reads RKNRKTNSGPIPTENGPKKPEI.

It belongs to the MTFR1 family. In terms of tissue distribution, widely expressed in embryonic tissues with higher expression in cartilage and hypertrophic chondrocytes. Specifically expressed in hypertrophic chondrocytes (at protein level).

Its subcellular location is the mitochondrion. May play a role in mitochondrial aerobic respiration. May also regulate mitochondrial organization and fission. The protein is Mitochondrial fission regulator 1 (MTFR1) of Gallus gallus (Chicken).